Consider the following 668-residue polypeptide: Hemocyanin subunit D (668 aa).

An N-terminal signal peptide occupies residues 1–22 (MDTRVLRLTLALVALSGVLADS). Cu cation contacts are provided by H206, H210, and H236. The N-linked (GlcNAc...) asparagine glycan is linked to N322. Positions 357, 361, and 397 each coordinate Cu cation. A disulfide bond links C567 and C614.

It belongs to the tyrosinase family. Hemocyanin subfamily. As to quaternary structure, 36-chain polymer consisting of 6 hexamers, each of which includes 4 different chains, A, B, C and D. Hemolymph.

Its subcellular location is the secreted. It localises to the extracellular space. Hemocyanins are copper-containing oxygen carriers occurring freely dissolved in the hemolymph of many mollusks and arthropods. The protein is Hemocyanin subunit D (HCD) of Scutigera coleoptrata (House centipede).